We begin with the raw amino-acid sequence, 261 residues long: Probable membrane transporter protein XF_0764 (261 aa).

The next 8 membrane-spanning stretches (helical) occupy residues 6 to 26 (LIVTIGSGGLVGFALGLLGGG), 29 to 49 (ILATPLLLYVVGVTNPHIAIG), 78 to 98 (VIFALVGTLGAFLGSSIGMLI), 99 to 119 (DGQRLLLLFGLLMAMVGLLML), 150 to 170 (AASGFFGIGGGFLIVPALIFA), 175 to 195 (TINAIGSSLLAVGTFGLITTL), 205 to 225 (WTIAMEFIVGGITGGGLGTLL), and 239 to 259 (VFGLIVIAVAIYVIWRSWASL).

Belongs to the 4-toluene sulfonate uptake permease (TSUP) (TC 2.A.102) family.

Its subcellular location is the cell membrane. The chain is Probable membrane transporter protein XF_0764 from Xylella fastidiosa (strain 9a5c).